We begin with the raw amino-acid sequence, 308 residues long: Glutamyl-Q tRNA(Asp) synthetase (308 aa).

Residues Arg19–Ser23 and Glu55 contribute to the L-glutamate site. Residues Pro22–Ser32 carry the 'HIGH' region motif. The Zn(2+) site is built by Cys111, Cys113, Tyr125, and Cys129. 2 residues coordinate L-glutamate: Tyr182 and Arg200. The short motif at Lys238 to Gln242 is the 'KMSKS' region element. Lys241 contacts ATP.

The protein belongs to the class-I aminoacyl-tRNA synthetase family. GluQ subfamily. Zn(2+) is required as a cofactor.

Functionally, catalyzes the tRNA-independent activation of glutamate in presence of ATP and the subsequent transfer of glutamate onto a tRNA(Asp). Glutamate is transferred on the 2-amino-5-(4,5-dihydroxy-2-cyclopenten-1-yl) moiety of the queuosine in the wobble position of the QUC anticodon. This is Glutamyl-Q tRNA(Asp) synthetase from Escherichia coli O6:H1 (strain CFT073 / ATCC 700928 / UPEC).